The chain runs to 297 residues: Protease HtpX homolog (297 aa).

Helical transmembrane passes span Ile-5–Ile-25 and Ile-44–Leu-64. Residue His-155 coordinates Zn(2+). Glu-156 is a catalytic residue. His-159 is a binding site for Zn(2+). 2 helical membrane passes run Leu-170–Val-190 and Phe-204–Ala-224. Glu-230 serves as a coordination point for Zn(2+).

The protein belongs to the peptidase M48B family. Zn(2+) serves as cofactor.

Its subcellular location is the cell membrane. In Bacillus licheniformis (strain ATCC 14580 / DSM 13 / JCM 2505 / CCUG 7422 / NBRC 12200 / NCIMB 9375 / NCTC 10341 / NRRL NRS-1264 / Gibson 46), this protein is Protease HtpX homolog.